Here is a 366-residue protein sequence, read N- to C-terminus: DNA-directed RNA polymerase subunit alpha (366 aa).

The tract at residues 1–233 is alpha N-terminal domain (alpha-NTD); sequence MVREKVRVST…DLFLPFLHAE (233 aa). An alpha C-terminal domain (alpha-CTD) region spans residues 264-366; sequence KNEIALKSIF…KDEMGFESLE (103 aa).

The protein belongs to the RNA polymerase alpha chain family. In terms of assembly, in plastids the minimal PEP RNA polymerase catalytic core is composed of four subunits: alpha, beta, beta', and beta''. When a (nuclear-encoded) sigma factor is associated with the core the holoenzyme is formed, which can initiate transcription.

It localises to the plastid. The protein resides in the chloroplast. The enzyme catalyses RNA(n) + a ribonucleoside 5'-triphosphate = RNA(n+1) + diphosphate. DNA-dependent RNA polymerase catalyzes the transcription of DNA into RNA using the four ribonucleoside triphosphates as substrates. The polypeptide is DNA-directed RNA polymerase subunit alpha (Oenothera elata subsp. hookeri (Hooker's evening primrose)).